The sequence spans 264 residues: Ribosomal RNA small subunit methyltransferase A (264 aa).

Residues Asn-12, Leu-14, Gly-39, Glu-60, Asp-83, and Asn-103 each contribute to the S-adenosyl-L-methionine site.

Belongs to the class I-like SAM-binding methyltransferase superfamily. rRNA adenine N(6)-methyltransferase family. RsmA subfamily.

It localises to the cytoplasm. The enzyme catalyses adenosine(1518)/adenosine(1519) in 16S rRNA + 4 S-adenosyl-L-methionine = N(6)-dimethyladenosine(1518)/N(6)-dimethyladenosine(1519) in 16S rRNA + 4 S-adenosyl-L-homocysteine + 4 H(+). Functionally, specifically dimethylates two adjacent adenosines (A1518 and A1519) in the loop of a conserved hairpin near the 3'-end of 16S rRNA in the 30S particle. May play a critical role in biogenesis of 30S subunits. The sequence is that of Ribosomal RNA small subunit methyltransferase A from Syntrophotalea carbinolica (strain DSM 2380 / NBRC 103641 / GraBd1) (Pelobacter carbinolicus).